Here is a 308-residue protein sequence, read N- to C-terminus: Ornithine carbamoyltransferase (308 aa).

Residues 56-59, Gln-83, Arg-107, and 134-137 contribute to the carbamoyl phosphate site; these read STRT and HPCQ. Residues Asn-165, Asp-225, and 229 to 230 contribute to the L-ornithine site; that span reads SM. Residues 266-267 and Arg-294 contribute to the carbamoyl phosphate site; that span reads CL.

This sequence belongs to the aspartate/ornithine carbamoyltransferase superfamily. OTCase family.

The protein resides in the cytoplasm. It carries out the reaction carbamoyl phosphate + L-ornithine = L-citrulline + phosphate + H(+). Its pathway is amino-acid biosynthesis; L-arginine biosynthesis; L-arginine from L-ornithine and carbamoyl phosphate: step 1/3. Reversibly catalyzes the transfer of the carbamoyl group from carbamoyl phosphate (CP) to the N(epsilon) atom of ornithine (ORN) to produce L-citrulline. The sequence is that of Ornithine carbamoyltransferase from Cereibacter sphaeroides (strain ATCC 17029 / ATH 2.4.9) (Rhodobacter sphaeroides).